The sequence spans 37 residues: MKIRASVRKICEKCRLIRRRGRIMVICSNPRHKQRQG.

It belongs to the bacterial ribosomal protein bL36 family.

Its subcellular location is the plastid. The protein resides in the chloroplast. The protein is Large ribosomal subunit protein bL36c of Dioscorea elephantipes (Elephant's foot yam).